The primary structure comprises 480 residues: UDP-glucose 6-dehydrogenase 4 (480 aa).

NAD(+)-binding positions include K3 to I20, D33, R38, T90, T128, and E161. Substrate-binding positions include E157–E161, K216, K216–L223, R256–G269, and G269. Catalysis depends on C272, which acts as the Nucleophile. K275 contributes to the NAD(+) binding site. Substrate-binding residues include F334 and K335. An NAD(+)-binding site is contributed by R342. R447 contributes to the substrate binding site.

This sequence belongs to the UDP-glucose/GDP-mannose dehydrogenase family.

It carries out the reaction UDP-alpha-D-glucose + 2 NAD(+) + H2O = UDP-alpha-D-glucuronate + 2 NADH + 3 H(+). It participates in nucleotide-sugar biosynthesis; UDP-alpha-D-glucuronate biosynthesis; UDP-alpha-D-glucuronate from UDP-alpha-D-glucose: step 1/1. Its activity is regulated as follows. Inhibited by UDP-xylose. Involved in the biosynthesis of UDP-glucuronic acid (UDP-GlcA), providing nucleotide sugars for cell-wall polymers. The protein is UDP-glucose 6-dehydrogenase 4 of Arabidopsis thaliana (Mouse-ear cress).